A 292-amino-acid chain; its full sequence is Ribosomal protein L11 methyltransferase (292 aa).

Residues T144, G165, D187, and N229 each coordinate S-adenosyl-L-methionine.

The protein belongs to the methyltransferase superfamily. PrmA family.

It localises to the cytoplasm. It carries out the reaction L-lysyl-[protein] + 3 S-adenosyl-L-methionine = N(6),N(6),N(6)-trimethyl-L-lysyl-[protein] + 3 S-adenosyl-L-homocysteine + 3 H(+). In terms of biological role, methylates ribosomal protein L11. The sequence is that of Ribosomal protein L11 methyltransferase from Saccharophagus degradans (strain 2-40 / ATCC 43961 / DSM 17024).